A 1027-amino-acid polypeptide reads, in one-letter code: Scavenger receptor cysteine-rich domain-containing protein SCART1 (1027 aa).

Positions 1-19 (MRAALWTLGLGPLLLNLWA) are cleaved as a signal peptide. The Extracellular portion of the chain corresponds to 20–906 (VPIGGPGALR…APFRTFWVVS (887 aa)). Residues 28 to 128 (LRLAYRHSTC…HAWVVVALCS (101 aa)) enclose the SRCR 1 domain. 3 cysteine pairs are disulfide-bonded: cysteine 53–cysteine 117, cysteine 66–cysteine 127, and cysteine 97–cysteine 107. Asparagine 94 carries N-linked (GlcNAc...) asparagine glycosylation. Asparagine 129 is a glycosylation site (N-linked (GlcNAc...) asparagine). SRCR domains are found at residues 135–227 (LRLV…VVCS), 232–326 (ARLV…LRCS), 328–428 (FRMV…AVCS), 434–534 (LRLR…VVCS), 555–656 (LSLH…VFCS), 661–761 (LRLR…AGLS), and 786–886 (LRVR…VRCW). Intrachain disulfides connect cysteine 160/cysteine 216, cysteine 171/cysteine 226, cysteine 196/cysteine 206, cysteine 253/cysteine 315, cysteine 266/cysteine 325, and cysteine 297/cysteine 307. N-linked (GlcNAc...) asparagine glycosylation occurs at asparagine 332. 7 disulfides stabilise this stretch: cysteine 353–cysteine 417, cysteine 366–cysteine 427, cysteine 397–cysteine 407, cysteine 472–cysteine 533, cysteine 503–cysteine 513, cysteine 594–cysteine 655, and cysteine 625–cysteine 635. 2 disulfide bridges follow: cysteine 824-cysteine 885 and cysteine 855-cysteine 865. Residues 907 to 927 (VVLGSLLGLLLLGLMAFLILP) form a helical membrane-spanning segment. The Cytoplasmic portion of the chain corresponds to 928 to 1027 (RVTQAMQRGL…AAFPLEEMTL (100 aa)).

Mainly expressed by CD4(+) and CD8(+) T lymphocytes. Also highly expressed in small intestine and colon. Expressed (at protein level) in small intestine, stomach, gall bladder, and placental villi.

The protein resides in the membrane. Its function is as follows. May play a role in the immune system, perhaps as a co-receptor on alphabeta and gammadelta T-cells. The sequence is that of Scavenger receptor cysteine-rich domain-containing protein SCART1 from Homo sapiens (Human).